Reading from the N-terminus, the 94-residue chain is MSRSLKKGPYCDARLLAKIEKMNETGEKRVIKTWSRASTIFPQMVGHTIAVHDGRKHVPVYITEDMVGHKLGEFAPTRIFRGHGAHTERSTALK.

The protein belongs to the universal ribosomal protein uS19 family.

Protein S19 forms a complex with S13 that binds strongly to the 16S ribosomal RNA. This chain is Small ribosomal subunit protein uS19, found in Pelotomaculum thermopropionicum (strain DSM 13744 / JCM 10971 / SI).